The following is an 867-amino-acid chain: Bifunctional diterpene synthase, chloroplastic (867 aa).

The N-terminal 55 residues, 1-55, are a transit peptide targeting the chloroplast; it reads MAKVLFSSFQQTGISGSLKSGQLSGVFINGTNLKSNAHAKRFRKNSTSSITIRCC. Substrate is bound at residue Lys-255. Mg(2+) is bound by residues Asp-389 and Asp-391. The DXDD motif signature appears at 389–392; the sequence is DIDD. Lys-474 contacts substrate. 5 residues coordinate Mg(2+): Asp-611, Asp-615, Asn-758, Thr-762, and Glu-766. Residues 611–615 carry the DDXXD motif motif; it reads DDLMD.

It belongs to the terpene synthase family. Mg(2+) serves as cofactor.

Its subcellular location is the plastid. The protein localises to the chloroplast. It carries out the reaction (+)-copalyl diphosphate = miltiradiene + diphosphate. The enzyme catalyses (2E,6E,10E)-geranylgeranyl diphosphate = (+)-copalyl diphosphate. It functions in the pathway secondary metabolite biosynthesis; terpenoid biosynthesis. Its function is as follows. Bifunctional diterpene cyclase that catalyzes the successive two-step type-B (protonation-initiated cyclization) and type-A (ionization-initiated cyclization) reactions of geranylgeranyl diphosphate (GGDP) producing successively (+)-copalyl diphosphate and miltiradiene. This Selaginella moellendorffii (Spikemoss) protein is Bifunctional diterpene synthase, chloroplastic (MDS).